The following is a 100-amino-acid chain: Large ribosomal subunit protein uL23 (100 aa).

It belongs to the universal ribosomal protein uL23 family. Part of the 50S ribosomal subunit. Contacts protein L29, and trigger factor when it is bound to the ribosome.

In terms of biological role, one of the early assembly proteins it binds 23S rRNA. One of the proteins that surrounds the polypeptide exit tunnel on the outside of the ribosome. Forms the main docking site for trigger factor binding to the ribosome. The sequence is that of Large ribosomal subunit protein uL23 from Colwellia psychrerythraea (strain 34H / ATCC BAA-681) (Vibrio psychroerythus).